A 239-amino-acid chain; its full sequence is Ribonuclease P protein component 3 (239 aa).

Belongs to the eukaryotic/archaeal RNase P protein component 3 family. As to quaternary structure, consists of a catalytic RNA component and at least 4-5 protein subunits.

Its subcellular location is the cytoplasm. The enzyme catalyses Endonucleolytic cleavage of RNA, removing 5'-extranucleotides from tRNA precursor.. Part of ribonuclease P, a protein complex that generates mature tRNA molecules by cleaving their 5'-ends. This chain is Ribonuclease P protein component 3, found in Methanosarcina barkeri (strain Fusaro / DSM 804).